Consider the following 350-residue polypeptide: UDP-rhamnose/UDP-galactose transporter 3 (350 aa).

Helical transmembrane passes span 12 to 32, 41 to 61, 81 to 101, 104 to 124, 133 to 153, 160 to 180, 200 to 220, 224 to 244, 257 to 277, and 286 to 306; these read AVSDMGAWAMNVISSVGIIMA, GFAFSFATTLTGFHFALTALV, LIWFSIVANVSIAAMNFSLML, VGFYQISKLSMIPVVCVMEWI, EVKISVVVVVVGVGICTVTDV, FICACVAIFSSSLQQILIGSL, AFSLLVVGPLVDYLLSGKFIM, MSSGCFLFILLSCGLAVFCNI, SFQVIGHMKTVCILTLGWLLF, and VAGMIVAIVGMVIYSWAMELE.

Belongs to the TPT transporter family. TPT (TC 2.A.7.9) subfamily.

Its subcellular location is the golgi apparatus membrane. In terms of biological role, nucleotide-sugar transporter that transports UDP-rhamnose or UDP-galactose and UMP in a strict counter-exchange mode. This chain is UDP-rhamnose/UDP-galactose transporter 3, found in Arabidopsis thaliana (Mouse-ear cress).